Reading from the N-terminus, the 269-residue chain is Expansin-B9 (269 aa).

A signal peptide spans 1 to 24; that stretch reads MGSLTTNIVLAVAVVAALVGGGSC. N-linked (GlcNAc...) asparagine glycosylation is present at asparagine 34. Residues 63–169 enclose the Expansin-like EG45 domain; the sequence is GGACGIKNVN…RRVRCKYPGG (107 aa). 3 disulfides stabilise this stretch: cysteine 66/cysteine 94, cysteine 97/cysteine 164, and cysteine 102/cysteine 108. One can recognise an Expansin-like CBD domain in the interval 183-264; that stretch reads NYLAVLVKFV…NWMPDAIYVS (82 aa).

Belongs to the expansin family. Expansin B subfamily.

It localises to the secreted. Its subcellular location is the cell wall. The protein resides in the membrane. In terms of biological role, may cause loosening and extension of plant cell walls by disrupting non-covalent bonding between cellulose microfibrils and matrix glucans. No enzymatic activity has been found. May be required for rapid internodal elongation in deepwater rice during submergence. The polypeptide is Expansin-B9 (EXPB9) (Oryza sativa subsp. japonica (Rice)).